Here is a 540-residue protein sequence, read N- to C-terminus: Signal peptide peptidase-like 3 (540 aa).

A signal peptide spans 1–28 (MSSFDPPNHRYSALVLILLLLGFSVAAA). The Lumenal segment spans residues 29–194 (DDVSWTEDSS…LYAPKRPAVD (166 aa)). A PA domain is found at 98–172 (SHLSSRLDGH…ISKSSGDALN (75 aa)). Residues Asn155 and Asn172 are each glycosylated (N-linked (GlcNAc...) asparagine). A helical membrane pass occupies residues 195-215 (LTAGLLLLMAVGTVVVASLWS). Residues 216–250 (ELTDPDQANESYSILAKDVSSAGTRKDDPEKEILD) are Cytoplasmic-facing. The chain crosses the membrane as a helical span at residues 251-273 (ISVTGAVFFIVTASIFLLLLFYF). Topologically, residues 274-276 (MSS) are lumenal. The helical transmembrane segment at 277–299 (WFVWVLTIFFCIGGMQGMHNIIM) threads the bilayer. Over 300–321 (AVILRKCRHLARKSVKLPLLGT) the chain is Cytoplasmic. The chain crosses the membrane as a helical span at residues 322–342 (MSVLSLLVNIVCLAFAVFWFI). The Lumenal segment spans residues 343–347 (KRHTS). Residues 348–368 (YSWVGQDILGICLMITALQVV) form a helical membrane-spanning segment. Topologically, residues 369–377 (RLPNIKVAT) are cytoplasmic. Residues 378–398 (VLLCCAFVYDIFWVFISPLIF) form a helical membrane-spanning segment. The active site involves Asp387. Residues 399–429 (HESVMIVVAQGDSSTGESIPMLLRIPRFFDP) lie on the Lumenal side of the membrane. The helical transmembrane segment at 430 to 450 (WGGYDMIGFGDILFPGLLISF) threads the bilayer. Asp440 is a catalytic residue. Topologically, residues 451 to 466 (ASRYDKIKKRVISNGY) are cytoplasmic. The helical transmembrane segment at 467-487 (FLWLTIGYGIGLLLTYLGLYL) threads the bilayer. The Lumenal segment spans residues 488–492 (MDGHG). Residues 493-513 (QPALLYIVPCTLGLAVILGLV) form a helical membrane-spanning segment. Positions 494–496 (PAL) match the PAL motif. At 514–540 (RGELKELWNYGIEESESHTPEDPMPVA) the chain is on the cytoplasmic side.

Belongs to the peptidase A22B family. Glycosylated. In terms of tissue distribution, ubiquitous.

The protein resides in the endosome membrane. Functionally, intramembrane-cleaving aspartic protease (I-CLiP) that cleaves type II membrane signal peptides in the hydrophobic plane of the membrane. This chain is Signal peptide peptidase-like 3 (SPPL3), found in Arabidopsis thaliana (Mouse-ear cress).